We begin with the raw amino-acid sequence, 388 residues long: Mannosyl-3-phosphoglycerate synthase (388 aa).

Belongs to the glycosyltransferase 2 family.

The protein resides in the cytoplasm. It carries out the reaction (2R)-3-phosphoglycerate + GDP-alpha-D-mannose = 2-O-(alpha-D-mannosyl)-3-phosphoglycerate + GDP + H(+). It functions in the pathway carbohydrate biosynthesis; 2-(alpha-D-mannosyl)-D-glycerate biosynthesis; 2-(alpha-D-mannosyl)-D-glycerate from GDP-alpha-D-mannose (MPG route): step 1/2. Its function is as follows. Transfers a mannosyl group from GDP-mannose to phosphoglycerate to form mannosyl-3-phosphoglycerate (MPG). In Aeropyrum pernix (strain ATCC 700893 / DSM 11879 / JCM 9820 / NBRC 100138 / K1), this protein is Mannosyl-3-phosphoglycerate synthase (mngA).